The following is a 93-amino-acid chain: MRLTILLIIIGLIGYIINSGPLGRTNIIKLFISIEIMLLGVTLLIILSGYNNDDILGLIIGIIVLIITGIESAIGLTILVNYYKIKGSLPTNI.

Transmembrane regions (helical) follow at residues 3–23 (LTILLIIIGLIGYIINSGPLG), 27–47 (IIKLFISIEIMLLGVTLLIIL), and 55–75 (ILGLIIGIIVLIITGIESAIG).

The protein belongs to the complex I subunit 4L family.

Its subcellular location is the mitochondrion membrane. The catalysed reaction is a ubiquinone + NADH + 5 H(+)(in) = a ubiquinol + NAD(+) + 4 H(+)(out). Core subunit of the mitochondrial membrane respiratory chain NADH dehydrogenase (Complex I) that is believed to belong to the minimal assembly required for catalysis. Complex I functions in the transfer of electrons from NADH to the respiratory chain. The immediate electron acceptor for the enzyme is believed to be ubiquinone. This chain is NADH-ubiquinone oxidoreductase chain 4L (ND4L), found in Wickerhamomyces canadensis (Yeast).